Reading from the N-terminus, the 255-residue chain is Pyrroloquinoline-quinone synthase (255 aa).

The protein belongs to the PqqC family.

It catalyses the reaction 6-(2-amino-2-carboxyethyl)-7,8-dioxo-1,2,3,4,7,8-hexahydroquinoline-2,4-dicarboxylate + 3 O2 = pyrroloquinoline quinone + 2 H2O2 + 2 H2O + H(+). It participates in cofactor biosynthesis; pyrroloquinoline quinone biosynthesis. Its function is as follows. Ring cyclization and eight-electron oxidation of 3a-(2-amino-2-carboxyethyl)-4,5-dioxo-4,5,6,7,8,9-hexahydroquinoline-7,9-dicarboxylic-acid to PQQ. The polypeptide is Pyrroloquinoline-quinone synthase (Granulibacter bethesdensis (strain ATCC BAA-1260 / CGDNIH1)).